Reading from the N-terminus, the 49-residue chain is Large ribosomal subunit protein bL33A (49 aa).

This sequence belongs to the bacterial ribosomal protein bL33 family.

The sequence is that of Large ribosomal subunit protein bL33A from Staphylococcus aureus (strain COL).